A 198-amino-acid chain; its full sequence is MKMKLFGRWDYEDVTVEDPGLRDYINLKPMLIPYSGGRHQKHRFGKAKIPIIERLAGRLMTSGHLGKKHKWTSEHQTGKKYNAYKIIIRTFEIIEKRTKQNPLKVFVKAIENAAPREETTTIEYGGARYPKAVDCSPQRRVDLAIRHMVWGAFHGSRKKPISIEEALAEEIINAYNNSLKSYAIKRKLEIEKTAESAR.

The protein belongs to the universal ribosomal protein uS7 family. As to quaternary structure, part of the 30S ribosomal subunit.

In terms of biological role, one of the primary rRNA binding proteins, it binds directly to 16S rRNA where it nucleates assembly of the head domain of the 30S subunit. Is located at the subunit interface close to the decoding center. This is Small ribosomal subunit protein uS7 from Nanoarchaeum equitans (strain Kin4-M).